Reading from the N-terminus, the 209-residue chain is Urease accessory protein UreG (209 aa).

18 to 25 (GPVGSGKT) provides a ligand contact to GTP.

The protein belongs to the SIMIBI class G3E GTPase family. UreG subfamily. In terms of assembly, homodimer. UreD, UreF and UreG form a complex that acts as a GTP-hydrolysis-dependent molecular chaperone, activating the urease apoprotein by helping to assemble the nickel containing metallocenter of UreC. The UreE protein probably delivers the nickel.

The protein resides in the cytoplasm. In terms of biological role, facilitates the functional incorporation of the urease nickel metallocenter. This process requires GTP hydrolysis, probably effectuated by UreG. The sequence is that of Urease accessory protein UreG from Cupriavidus pinatubonensis (strain JMP 134 / LMG 1197) (Cupriavidus necator (strain JMP 134)).